A 1102-amino-acid polypeptide reads, in one-letter code: DNA-directed RNA polymerase subunit beta (1102 aa).

The tract at residues 1081–1102 is disordered; it reads LPGKRTPSRPIYESLSTEGNQD.

The protein belongs to the RNA polymerase beta chain family. In terms of assembly, in cyanobacteria the RNAP catalytic core is composed of 2 alpha, 1 beta, 1 beta', 1 gamma and 1 omega subunit. When a sigma factor is associated with the core the holoenzyme is formed, which can initiate transcription.

The enzyme catalyses RNA(n) + a ribonucleoside 5'-triphosphate = RNA(n+1) + diphosphate. Functionally, DNA-dependent RNA polymerase catalyzes the transcription of DNA into RNA using the four ribonucleoside triphosphates as substrates. The protein is DNA-directed RNA polymerase subunit beta of Trichodesmium erythraeum (strain IMS101).